Here is a 218-residue protein sequence, read N- to C-terminus: Octanoyltransferase (218 aa).

Positions 32-214 (ALTPDEIWLV…HFTQLLGYND (183 aa)) constitute a BPL/LPL catalytic domain. Residues 71 to 78 (RGGQITYH), 143 to 145 (SLG), and 156 to 158 (GLA) contribute to the substrate site. Residue Cys-174 is the Acyl-thioester intermediate of the active site.

The protein belongs to the LipB family.

It localises to the cytoplasm. It catalyses the reaction octanoyl-[ACP] + L-lysyl-[protein] = N(6)-octanoyl-L-lysyl-[protein] + holo-[ACP] + H(+). It participates in protein modification; protein lipoylation via endogenous pathway; protein N(6)-(lipoyl)lysine from octanoyl-[acyl-carrier-protein]: step 1/2. Catalyzes the transfer of endogenously produced octanoic acid from octanoyl-acyl-carrier-protein onto the lipoyl domains of lipoate-dependent enzymes. Lipoyl-ACP can also act as a substrate although octanoyl-ACP is likely to be the physiological substrate. The sequence is that of Octanoyltransferase from Histophilus somni (strain 129Pt) (Haemophilus somnus).